A 165-amino-acid chain; its full sequence is Phosphopantetheine adenylyltransferase (165 aa).

Thr-9 provides a ligand contact to substrate. ATP is bound by residues 9–10 (TF) and His-17. Substrate is bound by residues Lys-41, Leu-78, and Arg-92. ATP contacts are provided by residues 93-95 (GLR), Glu-103, and 128-134 (HQAIASK).

The protein belongs to the bacterial CoaD family. As to quaternary structure, homohexamer. Mg(2+) is required as a cofactor.

It localises to the cytoplasm. The catalysed reaction is (R)-4'-phosphopantetheine + ATP + H(+) = 3'-dephospho-CoA + diphosphate. Its pathway is cofactor biosynthesis; coenzyme A biosynthesis; CoA from (R)-pantothenate: step 4/5. In terms of biological role, reversibly transfers an adenylyl group from ATP to 4'-phosphopantetheine, yielding dephospho-CoA (dPCoA) and pyrophosphate. This is Phosphopantetheine adenylyltransferase from Ruegeria sp. (strain TM1040) (Silicibacter sp.).